Consider the following 88-residue polypeptide: MTEGQGNRSTLFWLAQQDTRINLLIRRTRGRTEILLHLYKYPNPVKDNCSLSSVKVVVLRRKIASGDRRNDLHLERRRGNYEAYIGYL.

This is an uncharacterized protein from Banana bunchy top virus (isolate Autralia) (BBTV).